The following is a 132-amino-acid chain: Small ribosomal subunit protein uS11 (132 aa).

Belongs to the universal ribosomal protein uS11 family. Part of the 30S ribosomal subunit. Interacts with proteins S7 and S18. Binds to IF-3.

Functionally, located on the platform of the 30S subunit, it bridges several disparate RNA helices of the 16S rRNA. Forms part of the Shine-Dalgarno cleft in the 70S ribosome. This is Small ribosomal subunit protein uS11 from Legionella pneumophila (strain Corby).